A 216-amino-acid chain; its full sequence is Somatotropin (216 aa).

An N-terminal signal peptide occupies residues 1–26; it reads MAASPRNSVLLAFALLCLPWPQEVGA. Residue His45 coordinates Zn(2+). A disulfide bridge connects residues Cys78 and Cys189. Position 131 is a phosphoserine (Ser131). Zn(2+) is bound at residue Glu198. A disulfide bridge connects residues Cys206 and Cys214.

This sequence belongs to the somatotropin/prolactin family.

It is found in the secreted. In terms of biological role, plays an important role in growth control. Its major role in stimulating body growth is to stimulate the liver and other tissues to secrete IGF1. It stimulates both the differentiation and proliferation of myoblasts. It also stimulates amino acid uptake and protein synthesis in muscle and other tissues. In Canis lupus familiaris (Dog), this protein is Somatotropin (GH1).